We begin with the raw amino-acid sequence, 467 residues long: Uronate isomerase (467 aa).

Belongs to the metallo-dependent hydrolases superfamily. Uronate isomerase family.

The enzyme catalyses D-glucuronate = D-fructuronate. It carries out the reaction aldehydo-D-galacturonate = keto-D-tagaturonate. It participates in carbohydrate metabolism; pentose and glucuronate interconversion. This chain is Uronate isomerase, found in Haemophilus influenzae (strain PittGG).